The chain runs to 127 residues: uncharacterized protein (127 aa).

The protein resides in the mitochondrion. This is an uncharacterized protein from Arabidopsis thaliana (Mouse-ear cress).